The sequence spans 486 residues: Mitogen-activated protein kinase 17 (486 aa).

The Protein kinase domain occupies 16 to 307; that stretch reads YQIQEVVGKG…AEEALADPYF (292 aa). ATP-binding positions include 22–30 and Lys45; that span reads VGKGSYGVV. Asp142 functions as the Proton acceptor in the catalytic mechanism. A Phosphothreonine modification is found at Thr178. A TXY motif is present at residues 178 to 180; that stretch reads TDY. Tyr180 carries the phosphotyrosine modification. Thr183 carries the post-translational modification Phosphothreonine. The interval 386-455 is disordered; the sequence is EEHNDDEEEH…LSSQKASQVD (70 aa). Residues 422-433 show a composition bias toward low complexity; it reads SVHAQSSSASVV. The span at 440–452 shows a compositional bias: polar residues; the sequence is PNTATGLSSQKAS.

It belongs to the protein kinase superfamily. CMGC Ser/Thr protein kinase family. MAP kinase subfamily. Dually phosphorylated on Thr-178 and Tyr-180, which activates the enzyme.

It catalyses the reaction L-seryl-[protein] + ATP = O-phospho-L-seryl-[protein] + ADP + H(+). The catalysed reaction is L-threonyl-[protein] + ATP = O-phospho-L-threonyl-[protein] + ADP + H(+). With respect to regulation, activated by threonine and tyrosine phosphorylation. The protein is Mitogen-activated protein kinase 17 (MPK17) of Arabidopsis thaliana (Mouse-ear cress).